An 862-amino-acid polypeptide reads, in one-letter code: Putative PIP5K1A and PSMD4-like protein (862 aa).

Residues 28-396 (TSSALKGAIQ…WFQRFMCNTV (369 aa)) form the PIPK domain. Disordered stretches follow at residues 404 to 424 (PSPS…GSSG) and 453 to 481 (HLGC…PSFS). Residues 412-424 (SGSSFSQRAGSSG) show a composition bias toward low complexity. Positions 490–673 (MLTTSVDNSE…LADALISFPI (184 aa)) constitute a VWFA domain. The UIM 1 domain occupies 696 to 715 (SADPELALVLRVFMEEQRQR). Residues 716–740 (QEEEARQAAAASAAEAGIATTGTED) are disordered. Positions 722 to 731 (QAAAASAAEA) are enriched in low complexity. The UIM 2 domain occupies 766–783 (MTEEEKIVCAMQMSLQGA). The interval 826–862 (NLPGVDPNNEAIRNAVGSLASQATKDSKKDKKEEDKK) is disordered. The segment covering 850-862 (KDSKKDKKEEDKK) has biased composition (basic and acidic residues).

Testis-specific.

Its subcellular location is the cytoplasm. Functionally, has negligible PIP5 kinase activity. Binds to ubiquitinated proteins. In Homo sapiens (Human), this protein is Putative PIP5K1A and PSMD4-like protein (PIPSL).